Here is a 228-residue protein sequence, read N- to C-terminus: Translin (228 aa).

A DNA/RNA binding region spans residues 86 to 90 (RFHEH). The leucine-zipper stretch occupies residues 177-198 (LDSGFRLLNLKNDSLRKRYDGL). An N6-acetyllysine modification is found at lysine 187. Serine 190 carries the phosphoserine modification. The residue at position 199 (lysine 199) is an N6-acetyllysine.

Belongs to the translin family. Ring-shaped heterooctamer of six TSN and two TSNAX subunits, DNA/RNA binding occurs inside the ring.

The protein resides in the cytoplasm. It localises to the nucleus. Its function is as follows. DNA-binding protein that specifically recognizes consensus sequences at the breakpoint junctions in chromosomal translocations, mostly involving immunoglobulin (Ig)/T-cell receptor gene segments. Seems to recognize single-stranded DNA ends generated by staggered breaks occurring at recombination hot spots. In terms of biological role, exhibits both single-stranded and double-stranded endoribonuclease activity. May act as an activator of RNA-induced silencing complex (RISC) by facilitating endonucleolytic cleavage of the siRNA passenger strand. This chain is Translin (TSN), found in Cricetulus griseus (Chinese hamster).